We begin with the raw amino-acid sequence, 388 residues long: MATPLFHADLTVHTQSHDYPIVITENTATENAIAEESSMASQVAPYIAGQQVLIVTNETIAPLYLKALKQPLEVQFTVQVCVLPDGEQYKNQSSINQIYDVLMAAHFNRDVTLIALGGGVIGDMTGFSAASFMRGVNFIQIPTTLLSQVDSSVGGKTGINHPQGKNMIGAFWQPQMVLADMSTLKTLPARELSAGLAEVIKYALIMDADFLTWLEHNLPAMMALNLVILGEAVKRCCEYKADIVAQDERESGVRALLNFGHTFGHVIETHEGYGNWLHGEAVAAGMVQAAELSQKIGWLTSDEVARVKRVLLLANLPITPPPIAVQTALNLMGHDKKVKHGQIRLILLKSLGEAVLTNDFDPDLLTDVLSQHAIHAKDDAQATTATVL.

Residues 85-90 (DGEQYK), 119-123 (GVIGD), 143-144 (TT), K156, K165, and 183-186 (TLKT) each bind NAD(+). The Zn(2+) site is built by E198, H261, and H278.

It belongs to the sugar phosphate cyclases superfamily. Dehydroquinate synthase family. The cofactor is Co(2+). Zn(2+) serves as cofactor. Requires NAD(+) as cofactor.

The protein localises to the cytoplasm. It carries out the reaction 7-phospho-2-dehydro-3-deoxy-D-arabino-heptonate = 3-dehydroquinate + phosphate. The protein operates within metabolic intermediate biosynthesis; chorismate biosynthesis; chorismate from D-erythrose 4-phosphate and phosphoenolpyruvate: step 2/7. Its function is as follows. Catalyzes the conversion of 3-deoxy-D-arabino-heptulosonate 7-phosphate (DAHP) to dehydroquinate (DHQ). This is 3-dehydroquinate synthase from Psychrobacter arcticus (strain DSM 17307 / VKM B-2377 / 273-4).